The following is a 91-amino-acid chain: Large ribosomal subunit protein bL27 (91 aa).

The segment at Met1–Gly22 is disordered.

It belongs to the bacterial ribosomal protein bL27 family.

This Methylocella silvestris (strain DSM 15510 / CIP 108128 / LMG 27833 / NCIMB 13906 / BL2) protein is Large ribosomal subunit protein bL27.